A 325-amino-acid polypeptide reads, in one-letter code: Sulfite dehydrogenase subunit C (325 aa).

The next 8 membrane-spanning stretches (helical) occupy residues phenylalanine 5–valine 25, phenylalanine 43–phenylalanine 63, glutamate 87–phenylalanine 107, leucine 126–isoleucine 146, phenylalanine 165–glycine 185, asparagine 186–serine 206, valine 266–glycine 286, and leucine 290–phenylalanine 310.

It belongs to the DmsC family. In terms of assembly, forms a heterotrimeric membrane-bound complex composed of a catalytic heterodimer (SoeAB) and a membrane anchor protein (SoeC).

The protein localises to the cell inner membrane. Its function is as follows. Part of the SoeABC complex that catalyzes the oxidation of sulfite to sulfate. SoeC probably anchors and stabilizes the catalytic subunits. This Allochromatium vinosum (strain ATCC 17899 / DSM 180 / NBRC 103801 / NCIMB 10441 / D) (Chromatium vinosum) protein is Sulfite dehydrogenase subunit C.